A 303-amino-acid polypeptide reads, in one-letter code: Glutathione transport system permease protein GsiD (303 aa).

The next 6 helical transmembrane spans lie at 40–60 (AMTA…ARWI), 105–125 (LAAG…LGLL), 144–164 (LFAF…GSGI), 165–185 (ANVI…LVRG), 222–242 (IVVF…SLSF), and 266–286 (VIAP…VLAF). Residues 101-290 (AQISLAAGVF…LTVLAFNLLG (190 aa)) enclose the ABC transmembrane type-1 domain.

The protein belongs to the binding-protein-dependent transport system permease family. The complex is composed of two ATP-binding proteins (GsiA), two transmembrane proteins (GsiC and GsiD) and a solute-binding protein (GsiB).

Its subcellular location is the cell inner membrane. Part of the ABC transporter complex GsiABCD involved in glutathione import. Probably responsible for the translocation of the substrate across the membrane. This chain is Glutathione transport system permease protein GsiD, found in Escherichia coli O157:H7.